A 379-amino-acid polypeptide reads, in one-letter code: MGTKGKVIKCKAAIAWEAGKPLSIEEVEVAPPKAHEVRVQINAAGLCRSDTHVINPKFEGAFLPVILGHEGAGIVESVGPGVTNVKPGDKVIPLYIPHCKKCKFCLSPLTNFCEKFCKGKNPLIEQELMEDKTSRFTCKGKSIYHFFGISAFSQYTVVKDVNLAKIDDDANLERVCLIGCGFSTGYGAAINTAKVTPGSTCAVFGLGGVGLSAIMGCKTAGASRIIAIDINSDKFAKAKALGATDCLNPRELNKPVQDVIVEMTNGGVDFAIDCAGGSEVMKATVDCATVGWGSCTFVGVNLADKGLTISPIELILGRTLKGTNFGGWDAETVPKLVSDYKNGKFDLDALVTHTLPFDKINEALNLLDQGKSIRTVLIF.

The Zn(2+) site is built by Cys47, His69, Cys99, Cys102, Cys105, Cys113, and Cys176. NAD(+) is bound by residues Gly205–Gly210, Asp229, Lys234, Val298–Val300, and Arg374.

It belongs to the zinc-containing alcohol dehydrogenase family. Class-II subfamily. As to quaternary structure, homodimer. Zn(2+) is required as a cofactor.

The protein localises to the cytoplasm. The enzyme catalyses a primary alcohol + NAD(+) = an aldehyde + NADH + H(+). It catalyses the reaction a secondary alcohol + NAD(+) = a ketone + NADH + H(+). The protein is Alcohol dehydrogenase class-2 isozyme 1 (ADH2-1) of Oryctolagus cuniculus (Rabbit).